A 325-amino-acid chain; its full sequence is ATP synthase subunit gamma, mitochondrial (325 aa).

The N-terminal 42 residues, Met1–Ser42, are a transit peptide targeting the mitochondrion.

It belongs to the ATPase gamma chain family. In terms of assembly, F-type ATPases have 2 components, CF(1) - the catalytic core - and CF(0) - the membrane proton channel. CF(1) has five subunits: alpha(3), beta(3), gamma(1), delta(1), epsilon(1). CF(0) has three main subunits: a, b and c.

The protein localises to the mitochondrion. The protein resides in the mitochondrion inner membrane. Functionally, mitochondrial membrane ATP synthase (F(1)F(0) ATP synthase or Complex V) produces ATP from ADP in the presence of a proton gradient across the membrane which is generated by electron transport complexes of the respiratory chain. F-type ATPases consist of two structural domains, F(1) - containing the extramembraneous catalytic core, and F(0) - containing the membrane proton channel, linked together by a central stalk and a peripheral stalk. During catalysis, ATP synthesis in the catalytic domain of F(1) is coupled via a rotary mechanism of the central stalk subunits to proton translocation. Part of the complex F(1) domain and the central stalk which is part of the complex rotary element. The gamma subunit protrudes into the catalytic domain formed of alpha(3)beta(3). Rotation of the central stalk against the surrounding alpha(3)beta(3) subunits leads to hydrolysis of ATP in three separate catalytic sites on the beta subunits. This Arabidopsis thaliana (Mouse-ear cress) protein is ATP synthase subunit gamma, mitochondrial (ATPC).